Reading from the N-terminus, the 232-residue chain is 2,3-bisphosphoglycerate-dependent phosphoglycerate mutase 1 (232 aa).

Residues 8 to 15, 21 to 22, arginine 58, 114 to 117, lysine 125, 141 to 142, and 185 to 186 contribute to the substrate site; these read RHGQSLWN, TG, ERYY, RR, and GN. Catalysis depends on histidine 9, which acts as the Tele-phosphohistidine intermediate. The Proton donor/acceptor role is filled by glutamate 114.

It belongs to the phosphoglycerate mutase family. BPG-dependent PGAM subfamily.

It catalyses the reaction (2R)-2-phosphoglycerate = (2R)-3-phosphoglycerate. Its pathway is carbohydrate degradation; glycolysis; pyruvate from D-glyceraldehyde 3-phosphate: step 3/5. Its function is as follows. Catalyzes the interconversion of 2-phosphoglycerate and 3-phosphoglycerate. The sequence is that of 2,3-bisphosphoglycerate-dependent phosphoglycerate mutase 1 from Gloeobacter violaceus (strain ATCC 29082 / PCC 7421).